We begin with the raw amino-acid sequence, 317 residues long: Flavin-dependent thymidylate synthase (317 aa).

Ser46 is a binding site for FAD. An insert region spans residues 55-166 (FEWKKEKWIE…ELETDMDFYT (112 aa)). One can recognise a ThyX domain in the interval 100–317 (AVKERIKEAF…YRGTDKKNVI (218 aa)). Residues 178–181 (QWMR), 189–193 (EVSKR), and Arg259 each bind dUMP. FAD is bound by residues 181–183 (RHR) and Glu189. Residues 181–191 (RHRFGSYNEVS) carry the ThyX motif motif. FAD is bound at residue Asn281. Arg286 lines the dUMP pocket. Arg286 acts as the Involved in ionization of N3 of dUMP, leading to its activation in catalysis.

This sequence belongs to the thymidylate synthase ThyX family. In terms of assembly, homotetramer. It depends on FAD as a cofactor.

The enzyme catalyses dUMP + (6R)-5,10-methylene-5,6,7,8-tetrahydrofolate + NADPH + H(+) = dTMP + (6S)-5,6,7,8-tetrahydrofolate + NADP(+). It functions in the pathway pyrimidine metabolism; dTTP biosynthesis. In terms of biological role, catalyzes the reductive methylation of 2'-deoxyuridine-5'-monophosphate (dUMP) to 2'-deoxythymidine-5'-monophosphate (dTMP) while utilizing 5,10-methylenetetrahydrofolate (mTHF) as the methyl donor, and NADPH and FADH(2) as the reductant. This Aquifex aeolicus (strain VF5) protein is Flavin-dependent thymidylate synthase.